A 490-amino-acid polypeptide reads, in one-letter code: MKAFVWTLSVLLFLLGSGHCKGGQLKIKKITQRRYPRATDGKEEAKKCSYTFLVPEQKITGPICVNTKGQDAGTIKDMITRMDLENLKDVLSRQKREIDVLQLVVDVDGNIVNEVKLLRKESRNMNSRVTQLYMQLLHEIIRKRDNSLELSQLENKILNVTTEMLKMATRYRELEVKYASLTDLVNNQSVTITVLEEQCLRMFSRQDPHASPPLVQVVPRHSPNSHQYTPGLLGGNEIQRDPGYPRDVMPPPDLPTAPTKSPFKIPAVTFINEGPFKDCQQAKEAGHSASGIYMIKPENSNGLMQLWCENSLDPGGWTVIQKRTDGSVNFFRNWENYKKGFGNIDGEYWLGLDNIYKLSNQDNYKLMIELEDWSEKKVYAEYSSFRLEPESDYYRLRLGTYQGNAGDSMMWHNGKQFTTLDRDKDTYTGNCAHFHKGGWWYNACAHSNLNGVWYRGGHYRSKHQDGIFWAEYRGGSYSLRAVQMMIKPID.

Positions 1–22 (MKAFVWTLSVLLFLLGSGHCKG) are cleaved as a signal peptide. Positions 79-167 (ITRMDLENLK…LNVTTEMLKM (89 aa)) form a coiled coil. Residues asparagine 159 and asparagine 187 are each glycosylated (N-linked (GlcNAc...) asparagine). One can recognise a Fibrinogen C-terminal domain in the interval 270–490 (FINEGPFKDC…AVQMMIKPID (221 aa)). 2 cysteine pairs are disulfide-bonded: cysteine 279–cysteine 308 and cysteine 431–cysteine 444.

The protein resides in the secreted. This chain is Angiopoietin-related protein 1 (Angptl1), found in Mus musculus (Mouse).